The chain runs to 247 residues: C-type lectin domain family 7 member A (247 aa).

The Cytoplasmic portion of the chain corresponds to 1-44 (MEYHPDLENLDEDGYTQLHFDSQSNTRIAVVSEKGSCAASPPWR). Positions 15 to 18 (YTQL) match the ITAM-like motif. Residues 45–65 (LIAVILGILCLVILVIAVVLG) form a helical; Signal-anchor for type II membrane protein membrane-spanning segment. The Extracellular segment spans residues 66-247 (TMAIWRSNSG…YSICEKKFSM (182 aa)). An N-linked (GlcNAc...) asparagine glycan is attached at asparagine 91. 3 cysteine pairs are disulfide-bonded: cysteine 120–cysteine 131, cysteine 148–cysteine 241, and cysteine 220–cysteine 233. Residues 127–242 (YEKSCYLFSM…CSVPSYSICE (116 aa)) enclose the C-type lectin domain. Residue 146 to 153 (RQCWQLGS) coordinates (1,3-beta-D-glucosyl)n. Positions 157, 159, and 163 each coordinate a divalent metal cation. Glutamate 195 contacts (1,3-beta-D-glucosyl)n. A divalent metal cation is bound at residue glutamate 242.

As to quaternary structure, homodimer. Interacts with SYK; participates in leukocyte activation in presence of fungal pathogens. Interacts with CD37; this interaction controls CLEC7A-mediated IL-6 production. In terms of assembly, interacts with RANBP9. Post-translationally, phosphorylated on tyrosine residues in response to beta-glucan binding. Highly expressed in peripheral blood leukocytes and dendritic cells. Detected in spleen, bone marrow, lung, muscle, stomach and placenta.

Its subcellular location is the cell membrane. The protein resides in the cytoplasm. Lectin that functions as a pattern recognizing receptor (PRR) specific for beta-1,3-linked and beta-1,6-linked glucans, which constitute cell wall constituents from pathogenic bacteria and fungi. Necessary for the TLR2-mediated inflammatory response and activation of NF-kappa-B: upon beta-glucan binding, recruits SYK via its ITAM motif and promotes a signaling cascade that activates some CARD domain-BCL10-MALT1 (CBM) signalosomes, leading to the activation of NF-kappa-B and MAP kinase p38 (MAPK11, MAPK12, MAPK13 and/or MAPK14) pathways which stimulate expression of genes encoding pro-inflammatory cytokines and chemokines. Enhances cytokine production in macrophages and dendritic cells. Mediates production of reactive oxygen species in the cell. Mediates phagocytosis of C.albicans conidia. Binds T-cells in a way that does not involve their surface glycans and plays a role in T-cell activation. Stimulates T-cell proliferation. Induces phosphorylation of SCIMP after binding beta-glucans. In Homo sapiens (Human), this protein is C-type lectin domain family 7 member A.